Reading from the N-terminus, the 579-residue chain is General transcriptional corepressor tupA (579 aa).

Residues Asn-83–Ser-101 are compositionally biased toward polar residues. The disordered stretch occupies residues Asn-83–Trp-258. Low complexity-rich tracts occupy residues Asn-109 to Asn-128, Gln-157 to Leu-198, and Met-207 to Asn-224. The span at Lys-227 to Thr-256 shows a compositional bias: basic and acidic residues. WD repeat units follow at residues Gln-279–Val-319, Asp-325–Thr-364, Gly-367–Thr-406, Gly-413–Arg-452, Gly-455–Arg-494, Gly-501–Met-540, and Gly-543–Ser-579.

The protein belongs to the WD repeat TUP1 family. As to quaternary structure, associates with trfA to form the trfA-tupA corepressor complex.

The protein localises to the nucleus. Its function is as follows. Acts as a component of the trfA-tupA corepressor complex which is involved in the repression of many genes in a wide variety of physiological processes. May also be involved in the derepression of at least some target genes. The complex is recruited to target genes by interaction with DNA-bound transcriptional repressors. The complex recruits histone deacetylases to produce a repressive chromatin structure, interacts with hypoacetylated N-terminal tails of histones H3 and H4 that have been programmed for repression by the action of histone deacetylases and interferes directly with the transcriptional machinery by associating with the RNA polymerase II mediator complex. The chain is General transcriptional corepressor tupA (tupA) from Dictyostelium discoideum (Social amoeba).